Consider the following 432-residue polypeptide: 3-phosphoshikimate 1-carboxyvinyltransferase (432 aa).

3-phosphoshikimate is bound by residues Lys-23, Ser-24, and Arg-28. Lys-23 lines the phosphoenolpyruvate pocket. Residues Gly-99 and Arg-127 each contribute to the phosphoenolpyruvate site. 3-phosphoshikimate contacts are provided by Ser-172, Ser-173, Gln-174, Ser-200, Asp-317, Asn-341, and Lys-345. A phosphoenolpyruvate-binding site is contributed by Gln-174. The active-site Proton acceptor is Asp-317. Arg-349, Arg-391, and Lys-416 together coordinate phosphoenolpyruvate.

It belongs to the EPSP synthase family. As to quaternary structure, monomer.

It localises to the cytoplasm. It carries out the reaction 3-phosphoshikimate + phosphoenolpyruvate = 5-O-(1-carboxyvinyl)-3-phosphoshikimate + phosphate. Its pathway is metabolic intermediate biosynthesis; chorismate biosynthesis; chorismate from D-erythrose 4-phosphate and phosphoenolpyruvate: step 6/7. Catalyzes the transfer of the enolpyruvyl moiety of phosphoenolpyruvate (PEP) to the 5-hydroxyl of shikimate-3-phosphate (S3P) to produce enolpyruvyl shikimate-3-phosphate and inorganic phosphate. The protein is 3-phosphoshikimate 1-carboxyvinyltransferase of Blochmanniella pennsylvanica (strain BPEN).